The primary structure comprises 395 residues: S-adenosylmethionine synthase (395 aa).

His15 provides a ligand contact to ATP. Asp17 lines the Mg(2+) pocket. Glu43 serves as a coordination point for K(+). L-methionine is bound by residues Glu56 and Gln99. The segment at 99–109 (QSADIALGVDE) is flexible loop. Residues 174–176 (DGK), 240–241 (RF), Asp249, 255–256 (RK), Ala272, and Lys276 each bind ATP. Residue Asp249 participates in L-methionine binding. Lys280 serves as a coordination point for L-methionine.

Belongs to the AdoMet synthase family. As to quaternary structure, homotetramer; dimer of dimers. It depends on Mg(2+) as a cofactor. Requires K(+) as cofactor.

It localises to the cytoplasm. The enzyme catalyses L-methionine + ATP + H2O = S-adenosyl-L-methionine + phosphate + diphosphate. It participates in amino-acid biosynthesis; S-adenosyl-L-methionine biosynthesis; S-adenosyl-L-methionine from L-methionine: step 1/1. Catalyzes the formation of S-adenosylmethionine (AdoMet) from methionine and ATP. The overall synthetic reaction is composed of two sequential steps, AdoMet formation and the subsequent tripolyphosphate hydrolysis which occurs prior to release of AdoMet from the enzyme. This chain is S-adenosylmethionine synthase, found in Alkaliphilus oremlandii (strain OhILAs) (Clostridium oremlandii (strain OhILAs)).